Consider the following 373-residue polypeptide: Putative citrate synthase 2 (373 aa).

Active-site residues include His-250 and Glu-303.

It belongs to the citrate synthase family.

It catalyses the reaction oxaloacetate + acetyl-CoA + H2O = citrate + CoA + H(+). It participates in carbohydrate metabolism; tricarboxylic acid cycle; isocitrate from oxaloacetate: step 1/2. The sequence is that of Putative citrate synthase 2 (citA) from Mycobacterium bovis (strain ATCC BAA-935 / AF2122/97).